The sequence spans 367 residues: Probable protein phosphatase 2C 57 (367 aa).

The interval 1–29 (MEEHRLGGGGGGGGGGGRPPIPGAAGRKL) is disordered. Gly residues predominate over residues 7–18 (GGGGGGGGGGGR). The PPM-type phosphatase domain maps to 67–331 (RSGGWADIGS…DNLSVVVICF (265 aa)). Mn(2+)-binding residues include D111, G112, D279, and D322.

Belongs to the PP2C family. It depends on Mg(2+) as a cofactor. Requires Mn(2+) as cofactor.

It carries out the reaction O-phospho-L-seryl-[protein] + H2O = L-seryl-[protein] + phosphate. It catalyses the reaction O-phospho-L-threonyl-[protein] + H2O = L-threonyl-[protein] + phosphate. The chain is Probable protein phosphatase 2C 57 from Oryza sativa subsp. japonica (Rice).